Here is a 478-residue protein sequence, read N- to C-terminus: 3-isopropylmalate dehydratase large subunit (478 aa).

Residues Cys359, Cys420, and Cys423 each contribute to the [4Fe-4S] cluster site.

Belongs to the aconitase/IPM isomerase family. LeuC type 1 subfamily. In terms of assembly, heterodimer of LeuC and LeuD. Requires [4Fe-4S] cluster as cofactor.

The catalysed reaction is (2R,3S)-3-isopropylmalate = (2S)-2-isopropylmalate. Its pathway is amino-acid biosynthesis; L-leucine biosynthesis; L-leucine from 3-methyl-2-oxobutanoate: step 2/4. Catalyzes the isomerization between 2-isopropylmalate and 3-isopropylmalate, via the formation of 2-isopropylmaleate. In Psychrobacter sp. (strain PRwf-1), this protein is 3-isopropylmalate dehydratase large subunit.